A 55-amino-acid chain; its full sequence is Large ribosomal subunit protein bL33C (55 aa).

Belongs to the bacterial ribosomal protein bL33 family.

The protein is Large ribosomal subunit protein bL33C of Kineococcus radiotolerans (strain ATCC BAA-149 / DSM 14245 / SRS30216).